The sequence spans 218 residues: Large ribosomal subunit protein uL4 (218 aa).

A disordered region spans residues 54 to 106 (GTHAVKNRGAVSGGGRKPWKQKGTGRARQGSIRAPQWYHGGVAHGPVPRDYSQ).

It belongs to the universal ribosomal protein uL4 family. As to quaternary structure, part of the 50S ribosomal subunit.

In terms of biological role, one of the primary rRNA binding proteins, this protein initially binds near the 5'-end of the 23S rRNA. It is important during the early stages of 50S assembly. It makes multiple contacts with different domains of the 23S rRNA in the assembled 50S subunit and ribosome. Its function is as follows. Forms part of the polypeptide exit tunnel. The chain is Large ribosomal subunit protein uL4 from Bifidobacterium animalis subsp. lactis (strain AD011).